Here is an 851-residue protein sequence, read N- to C-terminus: DNA mismatch repair protein MutS (851 aa).

602 to 609 (GPNMSGKS) serves as a coordination point for ATP.

The protein belongs to the DNA mismatch repair MutS family.

Functionally, this protein is involved in the repair of mismatches in DNA. It is possible that it carries out the mismatch recognition step. This protein has a weak ATPase activity. This chain is DNA mismatch repair protein MutS, found in Streptococcus pyogenes serotype M28 (strain MGAS6180).